The chain runs to 242 residues: Carboxy-S-adenosyl-L-methionine synthase (242 aa).

S-adenosyl-L-methionine is bound by residues Y38, 63 to 65 (GCS), 88 to 89 (DN), 116 to 117 (DL), and R199.

The protein belongs to the class I-like SAM-binding methyltransferase superfamily. Cx-SAM synthase family. Homodimer.

The enzyme catalyses prephenate + S-adenosyl-L-methionine = carboxy-S-adenosyl-L-methionine + 3-phenylpyruvate + H2O. Catalyzes the conversion of S-adenosyl-L-methionine (SAM) to carboxy-S-adenosyl-L-methionine (Cx-SAM). In Methylococcus capsulatus (strain ATCC 33009 / NCIMB 11132 / Bath), this protein is Carboxy-S-adenosyl-L-methionine synthase.